A 256-amino-acid polypeptide reads, in one-letter code: uncharacterized protein (256 aa).

It belongs to the methyltransferase superfamily.

The protein localises to the cytoplasm. Its subcellular location is the nucleus. Probable methyltransferase. This is an uncharacterized protein from Schizosaccharomyces pombe (strain 972 / ATCC 24843) (Fission yeast).